The chain runs to 162 residues: Phosphopantetheine adenylyltransferase (162 aa).

Position 9 (serine 9) interacts with substrate. ATP is bound by residues 9-10 and histidine 17; that span reads SF. Positions 41, 77, and 91 each coordinate substrate. ATP is bound by residues 92-94, glutamate 102, and 126-132; these read GLR and YAFLSSS.

This sequence belongs to the bacterial CoaD family. As to quaternary structure, homohexamer. The cofactor is Mg(2+).

The protein localises to the cytoplasm. The catalysed reaction is (R)-4'-phosphopantetheine + ATP + H(+) = 3'-dephospho-CoA + diphosphate. Its pathway is cofactor biosynthesis; coenzyme A biosynthesis; CoA from (R)-pantothenate: step 4/5. Reversibly transfers an adenylyl group from ATP to 4'-phosphopantetheine, yielding dephospho-CoA (dPCoA) and pyrophosphate. In Parafrankia sp. (strain EAN1pec), this protein is Phosphopantetheine adenylyltransferase.